We begin with the raw amino-acid sequence, 159 residues long: Cyclic pyranopterin monophosphate synthase (159 aa).

Substrate-binding positions include 75–77 (LCH) and 113–114 (ME). The active site involves Asp128.

This sequence belongs to the MoaC family. Homohexamer; trimer of dimers.

The enzyme catalyses (8S)-3',8-cyclo-7,8-dihydroguanosine 5'-triphosphate = cyclic pyranopterin phosphate + diphosphate. It functions in the pathway cofactor biosynthesis; molybdopterin biosynthesis. Functionally, catalyzes the conversion of (8S)-3',8-cyclo-7,8-dihydroguanosine 5'-triphosphate to cyclic pyranopterin monophosphate (cPMP). The polypeptide is Cyclic pyranopterin monophosphate synthase (Cupriavidus necator (strain ATCC 17699 / DSM 428 / KCTC 22496 / NCIMB 10442 / H16 / Stanier 337) (Ralstonia eutropha)).